The chain runs to 339 residues: Uricase (339 aa).

Catalysis depends on charge relay system residues K33 and T78. The urate site is built by T78, D79, F201, R218, V266, Q267, and N293. H295 serves as the catalytic Charge relay system. The Microbody targeting signal motif lies at 337-339 (SHL).

The protein belongs to the uricase family.

It localises to the peroxisome. The catalysed reaction is urate + O2 + H2O = 5-hydroxyisourate + H2O2. The protein operates within purine metabolism; urate degradation; (S)-allantoin from urate: step 1/3. Its function is as follows. Catalyzes the oxidation of uric acid to 5-hydroxyisourate, which is further processed to form (S)-allantoin. This chain is Uricase (Uro), found in Drosophila subobscura (Fruit fly).